Consider the following 373-residue polypeptide: Glutamate 5-kinase (373 aa).

Lysine 16 serves as a coordination point for ATP. Substrate is bound by residues serine 56, aspartate 143, and asparagine 155. 175–176 is a binding site for ATP; it reads TD. One can recognise a PUA domain in the interval 281–359; sequence RGRLTLDDGA…SRIDSLLGYK (79 aa).

The protein belongs to the glutamate 5-kinase family.

Its subcellular location is the cytoplasm. The catalysed reaction is L-glutamate + ATP = L-glutamyl 5-phosphate + ADP. It functions in the pathway amino-acid biosynthesis; L-proline biosynthesis; L-glutamate 5-semialdehyde from L-glutamate: step 1/2. Its function is as follows. Catalyzes the transfer of a phosphate group to glutamate to form L-glutamate 5-phosphate. This Saccharophagus degradans (strain 2-40 / ATCC 43961 / DSM 17024) protein is Glutamate 5-kinase.